Consider the following 316-residue polypeptide: NAC domain-containing protein 2 (316 aa).

Positions 17-170 (LPPGFRFHPT…DWVLCRLYNK (154 aa)) constitute an NAC domain. A DNA-binding region spans residues 114–176 (LGIKKALVFY…LYNKKNEWEK (63 aa)). Positions 185-210 (EEASDMVTSQSHSHTHSWGETRTPES) are disordered. Over residues 190–200 (MVTSQSHSHTH) the composition is skewed to polar residues.

As to quaternary structure, forms homodimer. Interacts with NAC071. In terms of tissue distribution, expressed in roots and stamens.

It localises to the nucleus. Functionally, transcription factor that possesses transactivation activity. Transcription activator involved in response to abiotic stresses. Plays a positive role during dehydration and salt stress. Binds specifically to the 5'-CATGTG-3' motif found in promoters of stress-responsive genes. This chain is NAC domain-containing protein 2, found in Oryza sativa subsp. japonica (Rice).